Reading from the N-terminus, the 239-residue chain is Pyridoxine 5'-phosphate synthase (239 aa).

Asn-7 is a 3-amino-2-oxopropyl phosphate binding site. 1-deoxy-D-xylulose 5-phosphate is bound at residue 9-10 (DH). A 3-amino-2-oxopropyl phosphate-binding site is contributed by Arg-18. Catalysis depends on His-43, which acts as the Proton acceptor. 1-deoxy-D-xylulose 5-phosphate contacts are provided by Arg-45 and His-50. Residue Glu-70 is the Proton acceptor of the active site. Thr-100 is a 1-deoxy-D-xylulose 5-phosphate binding site. Catalysis depends on His-191, which acts as the Proton donor. 3-amino-2-oxopropyl phosphate contacts are provided by residues Gly-192 and 213–214 (GH).

It belongs to the PNP synthase family. Homooctamer; tetramer of dimers.

The protein resides in the cytoplasm. The enzyme catalyses 3-amino-2-oxopropyl phosphate + 1-deoxy-D-xylulose 5-phosphate = pyridoxine 5'-phosphate + phosphate + 2 H2O + H(+). Its pathway is cofactor biosynthesis; pyridoxine 5'-phosphate biosynthesis; pyridoxine 5'-phosphate from D-erythrose 4-phosphate: step 5/5. In terms of biological role, catalyzes the complicated ring closure reaction between the two acyclic compounds 1-deoxy-D-xylulose-5-phosphate (DXP) and 3-amino-2-oxopropyl phosphate (1-amino-acetone-3-phosphate or AAP) to form pyridoxine 5'-phosphate (PNP) and inorganic phosphate. The protein is Pyridoxine 5'-phosphate synthase of Geotalea uraniireducens (strain Rf4) (Geobacter uraniireducens).